We begin with the raw amino-acid sequence, 341 residues long: L-threonine 3-dehydrogenase (341 aa).

Zn(2+) is bound at residue Cys-38. Active-site charge relay system residues include Thr-40 and His-43. Zn(2+) is bound by residues His-63, Glu-64, Cys-93, Cys-96, Cys-99, and Cys-107. Residues Ile-175, Asp-195, Arg-200, 262-264 (LGI), and 286-287 (IY) each bind NAD(+).

The protein belongs to the zinc-containing alcohol dehydrogenase family. Homotetramer. It depends on Zn(2+) as a cofactor.

It is found in the cytoplasm. The catalysed reaction is L-threonine + NAD(+) = (2S)-2-amino-3-oxobutanoate + NADH + H(+). It functions in the pathway amino-acid degradation; L-threonine degradation via oxydo-reductase pathway; glycine from L-threonine: step 1/2. Catalyzes the NAD(+)-dependent oxidation of L-threonine to 2-amino-3-ketobutyrate. This chain is L-threonine 3-dehydrogenase, found in Klebsiella pneumoniae (strain 342).